Consider the following 325-residue polypeptide: Tumor necrosis factor soluble receptor (325 aa).

An N-terminal signal peptide occupies residues 1–16 (MLRLIALLVCVVYVYG). 4 TNFR-Cys repeats span residues 27-62 (KCGG…TVCS), 63-104 (PCED…DRVC), 105-147 (NCST…TLCE), and 148-186 (KCPP…TSCT). Cystine bridges form between cysteine 28–cysteine 39, cysteine 40–cysteine 53, cysteine 43–cysteine 61, cysteine 64–cysteine 79, cysteine 82–cysteine 96, and cysteine 86–cysteine 104. Asparagine 105 is a glycosylation site (N-linked (GlcNAc...) asparagine; by host). Cystine bridges form between cysteine 106–cysteine 120, cysteine 123–cysteine 146, cysteine 129–cysteine 149, and cysteine 164–cysteine 185. Residues asparagine 181, asparagine 205, and asparagine 238 are each glycosylated (N-linked (GlcNAc...) asparagine; by host).

Binds to TNF-alpha and beta. Probably prevents TNF to reach cellular target and thereby deampening the potential antiviral effects of the cytokine. This is Tumor necrosis factor soluble receptor from Oryctolagus cuniculus (Rabbit).